A 540-amino-acid polypeptide reads, in one-letter code: Probable protein kinase UbiB (540 aa).

A helical membrane pass occupies residues 24-44; sequence LLFEQPLLPWWLASLRLLMPW. Positions 126–494 constitute a Protein kinase domain; sequence RFDVEPLASA…RRRQGDRWAL (369 aa). ATP-binding positions include 132–140 and Lys154; that span reads LASASVAQV. Asp289 (proton acceptor) is an active-site residue. Helical transmembrane passes span 496 to 516 and 518 to 538; these read LLGAGLLGGGAVLAAGAAEAA and LAAPAAWPAWLMLAAGLYLIV.

Belongs to the ABC1 family. UbiB subfamily.

The protein resides in the cell inner membrane. It participates in cofactor biosynthesis; ubiquinone biosynthesis [regulation]. Is probably a protein kinase regulator of UbiI activity which is involved in aerobic coenzyme Q (ubiquinone) biosynthesis. This Pseudomonas putida (strain GB-1) protein is Probable protein kinase UbiB.